Here is a 213-residue protein sequence, read N- to C-terminus: Kynurenine formamidase (213 aa).

W18 serves as a coordination point for substrate. 3 residues coordinate Zn(2+): H48, H52, and D54. The Proton donor/acceptor role is filled by H58. Zn(2+) contacts are provided by H160 and E172.

It belongs to the Cyclase 1 superfamily. KynB family. As to quaternary structure, homodimer. Requires Zn(2+) as cofactor.

It catalyses the reaction N-formyl-L-kynurenine + H2O = L-kynurenine + formate + H(+). Its pathway is amino-acid degradation; L-tryptophan degradation via kynurenine pathway; L-kynurenine from L-tryptophan: step 2/2. Its function is as follows. Catalyzes the hydrolysis of N-formyl-L-kynurenine to L-kynurenine, the second step in the kynurenine pathway of tryptophan degradation. The polypeptide is Kynurenine formamidase (Burkholderia orbicola (strain MC0-3)).